A 105-amino-acid polypeptide reads, in one-letter code: Nitrogen fixation nifHD region glnB-like protein 1 (105 aa).

Belongs to the P(II) protein family.

Its function is as follows. Could be involved in the regulation of nitrogen fixation. The polypeptide is Nitrogen fixation nifHD region glnB-like protein 1 (glnBI) (Methanococcus maripaludis (Methanococcus deltae)).